The following is a 642-amino-acid chain: 3D-(3,5/4)-trihydroxycyclohexane-1,2-dione hydrolase (642 aa).

Residue Glu71 participates in thiamine diphosphate binding. The interval 446–526 (SLPGDVQRIW…INILVFDNSG (81 aa)) is thiamine pyrophosphate binding. Asp497 and Asn524 together coordinate Mg(2+).

Belongs to the TPP enzyme family. Requires Mg(2+) as cofactor. Thiamine diphosphate is required as a cofactor.

The enzyme catalyses 3D-3,5/4-trihydroxycyclohexane-1,2-dione + H2O = 5-deoxy-D-glucuronate + H(+). Its pathway is polyol metabolism; myo-inositol degradation into acetyl-CoA; acetyl-CoA from myo-inositol: step 3/7. Its function is as follows. Involved in the cleavage of the C1-C2 bond of 3D-(3,5/4)-trihydroxycyclohexane-1,2-dione (THcHDO) to yield 5-deoxy-glucuronate (5DG). The polypeptide is 3D-(3,5/4)-trihydroxycyclohexane-1,2-dione hydrolase (Lacticaseibacillus casei (Lactobacillus casei)).